A 537-amino-acid chain; its full sequence is Chaperonin GroEL (537 aa).

ATP is bound by residues 29–32 (TLGP), 86–90 (DGTTT), G413, and D492.

The protein belongs to the chaperonin (HSP60) family. In terms of assembly, forms a cylinder of 14 subunits composed of two heptameric rings stacked back-to-back. Interacts with the co-chaperonin GroES.

It localises to the cytoplasm. It carries out the reaction ATP + H2O + a folded polypeptide = ADP + phosphate + an unfolded polypeptide.. Together with its co-chaperonin GroES, plays an essential role in assisting protein folding. The GroEL-GroES system forms a nano-cage that allows encapsulation of the non-native substrate proteins and provides a physical environment optimized to promote and accelerate protein folding. The chain is Chaperonin GroEL from Dehalococcoides mccartyi (strain CBDB1).